A 996-amino-acid polypeptide reads, in one-letter code: Filament-like plant protein 5 (996 aa).

A disordered region spans residues 1–20 (MEGRGWPWKRKSSDKATTEK). 4 coiled-coil regions span residues 59-94 (THMS…TKES), 133-248 (TAED…KYDL), 280-301 (VKKI…RKKL), and 359-387 (LTRR…LQVS). Disordered regions lie at residues 409 to 482 (NNDK…SSSR) and 496 to 534 (VGSD…DEDT). The segment covering 417–428 (SNSRNLSESLSS) has biased composition (low complexity). Residues 471 to 482 (VNGSSKPRSSSR) show a composition bias toward polar residues. Residues 503–527 (ANSASKSSNSVCSRRSVEKQSSSKS) show a composition bias toward low complexity. Coiled-coil stretches lie at residues 601-622 (QNSE…VANI), 737-841 (DSSC…FTTE), and 876-906 (NQEK…QSLQ). A disordered region spans residues 962-996 (IMKSSSVSSSSKEDNEKHTRGLGRFFSSKSKNSAR).

Belongs to the FPP family. In terms of assembly, interacts with WPP/MAF proteins.

The polypeptide is Filament-like plant protein 5 (FPP5) (Arabidopsis thaliana (Mouse-ear cress)).